Reading from the N-terminus, the 179-residue chain is Peptidyl-prolyl cis-trans isomerase H (179 aa).

The PPIase cyclophilin-type domain occupies 16–178 (FFDISIGDTP…LQVRIAECGE (163 aa)).

It belongs to the cyclophilin-type PPIase family. PPIase H subfamily.

Its subcellular location is the nucleus. It catalyses the reaction [protein]-peptidylproline (omega=180) = [protein]-peptidylproline (omega=0). Its function is as follows. PPIases accelerate the folding of proteins. It catalyzes the cis-trans isomerization of proline imidic peptide bonds in oligopeptides. The chain is Peptidyl-prolyl cis-trans isomerase H (CYP3) from Cryptococcus neoformans var. neoformans serotype D (strain B-3501A) (Filobasidiella neoformans).